Reading from the N-terminus, the 318-residue chain is Ribosomal RNA small subunit methyltransferase H (318 aa).

S-adenosyl-L-methionine contacts are provided by residues 35–37 (GGH), Asp54, Phe83, Asp104, and Gln111.

Belongs to the methyltransferase superfamily. RsmH family.

It localises to the cytoplasm. The catalysed reaction is cytidine(1402) in 16S rRNA + S-adenosyl-L-methionine = N(4)-methylcytidine(1402) in 16S rRNA + S-adenosyl-L-homocysteine + H(+). Specifically methylates the N4 position of cytidine in position 1402 (C1402) of 16S rRNA. The chain is Ribosomal RNA small subunit methyltransferase H from Latilactobacillus sakei subsp. sakei (strain 23K) (Lactobacillus sakei subsp. sakei).